A 563-amino-acid chain; its full sequence is Light-independent protochlorophyllide reductase subunit B (563 aa).

A [4Fe-4S] cluster-binding site is contributed by D36. The active-site Proton donor is D349. 484 to 485 (GM) provides a ligand contact to substrate.

It belongs to the ChlB/BchB/BchZ family. Protochlorophyllide reductase is composed of three subunits; ChlL, ChlN and ChlB. Forms a heterotetramer of two ChlB and two ChlN subunits. [4Fe-4S] cluster serves as cofactor.

It is found in the plastid. The protein resides in the chloroplast. It carries out the reaction chlorophyllide a + oxidized 2[4Fe-4S]-[ferredoxin] + 2 ADP + 2 phosphate = protochlorophyllide a + reduced 2[4Fe-4S]-[ferredoxin] + 2 ATP + 2 H2O. It participates in porphyrin-containing compound metabolism; chlorophyll biosynthesis (light-independent). Functionally, component of the dark-operative protochlorophyllide reductase (DPOR) that uses Mg-ATP and reduced ferredoxin to reduce ring D of protochlorophyllide (Pchlide) to form chlorophyllide a (Chlide). This reaction is light-independent. The NB-protein (ChlN-ChlB) is the catalytic component of the complex. This is Light-independent protochlorophyllide reductase subunit B from Chlamydomonas moewusii (Chlamydomonas eugametos).